A 201-amino-acid chain; its full sequence is Casparian strip membrane protein 7 (201 aa).

Over residues 1-11 the composition is skewed to acidic residues; that stretch reads MEAGEEIEDGE. The interval 1–26 is disordered; it reads MEAGEEIEDGEPSTPTYKAHHPPPHL. Topologically, residues 1–34 are cytoplasmic; it reads MEAGEEIEDGEPSTPTYKAHHPPPHLPPPMRSSG. The chain crosses the membrane as a helical span at residues 35–55; it reads VSLVLSVADLVLRFVAIGGTA. Residues 56-86 are Extracellular-facing; the sequence is GSAIAMATTSETLPFAAPFVRFRAEYSDLPT. Residues 87–107 form a helical membrane-spanning segment; that stretch reads LMFFVVASSVVCAYLVLSLPA. Topologically, residues 108–128 are cytoplasmic; the sequence is SVVHVVRPGARSSRAILAFLD. Residues 129–149 form a helical membrane-spanning segment; that stretch reads TVMLALLTASASAAAAIVYLA. At 150 to 171 the chain is on the extracellular side; the sequence is HRGSARANWLGICQQFTSFCQR. The chain crosses the membrane as a helical span at residues 172–192; it reads ITASLVGSFAAAVVLVALVFL. Topologically, residues 193–201 are cytoplasmic; it reads SALSLARRA.

This sequence belongs to the Casparian strip membrane proteins (CASP) family. Homodimer and heterodimers.

Its subcellular location is the cell membrane. Regulates membrane-cell wall junctions and localized cell wall deposition. Required for establishment of the Casparian strip membrane domain (CSD) and the subsequent formation of Casparian strips, a cell wall modification of the root endodermis that determines an apoplastic barrier between the intraorganismal apoplasm and the extraorganismal apoplasm and prevents lateral diffusion. The chain is Casparian strip membrane protein 7 from Oryza sativa subsp. japonica (Rice).